A 205-amino-acid chain; its full sequence is Small ribosomal subunit protein uS4c (205 aa).

The segment at 22–42 (TSKISKKTNTPGEHGQPQNKL) is disordered. Residues 28–42 (KTNTPGEHGQPQNKL) show a composition bias toward polar residues. The 64-residue stretch at 94-157 (MRLDNIVYRL…ASRDLVKKFV (64 aa)) folds into the S4 RNA-binding domain.

It belongs to the universal ribosomal protein uS4 family. Part of the 30S ribosomal subunit. Contacts protein S5. The interaction surface between S4 and S5 is involved in control of translational fidelity.

The protein resides in the plastid. It localises to the chloroplast. Its function is as follows. One of the primary rRNA binding proteins, it binds directly to 16S rRNA where it nucleates assembly of the body of the 30S subunit. Functionally, with S5 and S12 plays an important role in translational accuracy. The polypeptide is Small ribosomal subunit protein uS4c (rps4) (Tupiella akineta (Green alga)).